The primary structure comprises 112 residues: Protein FAM32A (112 aa).

Residues 23-58 (TKRKKKKKDKDKAKLLEAMGTSKKNEEEKRRGLDKR) are disordered. Residues 45 to 58 (KKNEEEKRRGLDKR) show a composition bias toward basic and acidic residues.

It belongs to the FAM32 family.

Its subcellular location is the nucleus. May induce G2 arrest and apoptosis. May also increase cell sensitivity to apoptotic stimuli. The sequence is that of Protein FAM32A (FAM32A) from Bos taurus (Bovine).